Consider the following 141-residue polypeptide: Ly6/PLAUR domain-containing protein 1 (141 aa).

Residues 1 to 20 (MWVLGIAATFCGLFWLPGLA) form the signal peptide. 6 disulfides stabilise this stretch: Cys-25/Cys-54, Cys-28/Cys-37, Cys-46/Cys-71, Cys-77/Cys-100, Cys-88/Cys-97, and Cys-101/Cys-106. Residues 25–107 (CYQCEEFQLN…ISCCNTPLCN (83 aa)) form the UPAR/Ly6 domain. A glycan (N-linked (GlcNAc...) asparagine) is linked at Asn-45. A lipid anchor (GPI-anchor amidated glycine) is attached at Gly-115. Residues 116-141 (SSASAIRPGLLTTLLFFHLALCLAHC) constitute a propeptide, removed in mature form.

In terms of assembly, interacts with CHRNA4 and nAChRs containing alpha-4:beta-2 (CHRNA4:CHRNB2) and alpha-7 (CHRNA7) subunits. Preferentially expressed in the nervous system. Expressed in embryonic and postnatal postmitotic central and peripheral neurons including subpopulations of motor neurons, sensory neurons, interneurons and neurons of the autonomous nervous system. Expressed around the growing nerves in the limb bud. Expressed at high levels in specific brain regions such as the prefrontal cortex, amygdala, hippocampus, mediodorsal thalamus, dentate gyrus and specific brainstem nuclei (at protein level).

The protein resides in the cell membrane. Functionally, believed to act as a modulator of nicotinic acetylcholine receptors (nAChRs) activity. In vitro increases receptor desensitization and decreases affinity for ACh of alpha-4:beta-2-containing nAChRs. May play a role in the intracellular trafficking of alpha-4:beta-2 and alpha-7-containing nAChRs and may inhibit their expression at the cell surface. May be involved in the control of anxiety. The protein is Ly6/PLAUR domain-containing protein 1 (Lypd1) of Mus musculus (Mouse).